The chain runs to 390 residues: Transforming growth factor beta-1 proprotein (390 aa).

The N-terminal stretch at 1–29 (MPPSGLRLLPLLLPLLWLLVLTPGRPAAG) is a signal peptide. Residues 30 to 74 (LSTCKTIDMELVKRKRIEAIRGQILSKLRLASPPSQGDVPPGPLP) are straightjacket domain. Residues 75-271 (EAVLALYNST…ATPLERAQHL (197 aa)) are arm domain. N-linked (GlcNAc...) asparagine glycosylation is found at N82, N136, and N176. The interval 226–252 (DSKDNTLHVEINGFNSGRRGDLATIHG) is bowtie tail. A Cell attachment site motif is present at residues 244–246 (RGD). Intrachain disulfides connect C285-C294, C293-C356, C322-C387, and C326-C389.

This sequence belongs to the TGF-beta family. Homodimer; disulfide-linked. Interacts with the serine proteases, HTRA1 and HTRA3: the interaction with either inhibits TGFB1-mediated signaling and the HTRA protease activity is required for this inhibition. May interact with THSD4; this interaction may lead to sequestration by FBN1 microfibril assembly and attenuation of TGFB signaling. Interacts with CD109, DPT and ASPN. Interacts with EFEMP2. Interacts with TSKU; the interaction contributes to regulation of the hair cycle. Interacts with TGFBR3. As to quaternary structure, homodimer; disulfide-linked. Interacts with transforming growth factor beta-1 (TGF-beta-1) chain; interaction is non-covalent and maintains TGF-beta-1 in a latent state; each latency-associated peptide (LAP) monomer interacts with TGF-beta-1 in the other monomer. Interacts with LTBP1; leading to regulation of TGF-beta-1 activation. Interacts with LRRC32/GARP; leading to regulation of TGF-beta-1 activation on the surface of activated regulatory T-cells (Tregs). Interacts with LRRC33/NRROS; leading to regulation of TGF-beta-1 activation in macrophages and microglia. Interacts (via cell attachment site) with integrins ITGAV and ITGB6 (ITGAV:ITGB6), leading to release of the active TGF-beta-1. Interacts with NREP; the interaction results in a decrease in TGFB1 autoinduction. Interacts with HSP90AB1; inhibits latent TGFB1 activation. In terms of assembly, homodimer; disulfide-linked. Interacts with TGF-beta receptors (TGFBR1 and TGFBR2), leading to signal transduction. Post-translationally, transforming growth factor beta-1 proprotein: The precursor proprotein is cleaved in the Golgi apparatus by FURIN to form Transforming growth factor beta-1 (TGF-beta-1) and Latency-associated peptide (LAP) chains, which remain non-covalently linked, rendering TGF-beta-1 inactive. In terms of processing, N-glycosylated. Deglycosylation leads to activation of Transforming growth factor beta-1 (TGF-beta-1); mechanisms triggering deglycosylation-driven activation of TGF-beta-1 are however unclear.

The protein resides in the secreted. The protein localises to the extracellular space. Its subcellular location is the extracellular matrix. Functionally, transforming growth factor beta-1 proprotein: Precursor of the Latency-associated peptide (LAP) and Transforming growth factor beta-1 (TGF-beta-1) chains, which constitute the regulatory and active subunit of TGF-beta-1, respectively. Required to maintain the Transforming growth factor beta-1 (TGF-beta-1) chain in a latent state during storage in extracellular matrix. Associates non-covalently with TGF-beta-1 and regulates its activation via interaction with 'milieu molecules', such as LTBP1, LRRC32/GARP and LRRC33/NRROS, that control activation of TGF-beta-1. Interaction with LRRC33/NRROS regulates activation of TGF-beta-1 in macrophages and microglia. Interaction with LRRC32/GARP controls activation of TGF-beta-1 on the surface of activated regulatory T-cells (Tregs). Interaction with integrins (ITGAV:ITGB6 or ITGAV:ITGB8) results in distortion of the Latency-associated peptide chain and subsequent release of the active TGF-beta-1. In terms of biological role, multifunctional protein that regulates the growth and differentiation of various cell types and is involved in various processes, such as normal development, immune function, microglia function and responses to neurodegeneration. Activation into mature form follows different steps: following cleavage of the proprotein in the Golgi apparatus, Latency-associated peptide (LAP) and Transforming growth factor beta-1 (TGF-beta-1) chains remain non-covalently linked rendering TGF-beta-1 inactive during storage in extracellular matrix. At the same time, LAP chain interacts with 'milieu molecules', such as LTBP1, LRRC32/GARP and LRRC33/NRROS that control activation of TGF-beta-1 and maintain it in a latent state during storage in extracellular milieus. TGF-beta-1 is released from LAP by integrins (ITGAV:ITGB6 or ITGAV:ITGB8): integrin-binding to LAP stabilizes an alternative conformation of the LAP bowtie tail and results in distortion of the LAP chain and subsequent release of the active TGF-beta-1. Once activated following release of LAP, TGF-beta-1 acts by binding to TGF-beta receptors (TGFBR1 and TGFBR2), which transduce signal. While expressed by many cells types, TGF-beta-1 only has a very localized range of action within cell environment thanks to fine regulation of its activation by Latency-associated peptide chain (LAP) and 'milieu molecules'. Plays an important role in bone remodeling: acts as a potent stimulator of osteoblastic bone formation, causing chemotaxis, proliferation and differentiation in committed osteoblasts. Can promote either T-helper 17 cells (Th17) or regulatory T-cells (Treg) lineage differentiation in a concentration-dependent manner. At high concentrations, leads to FOXP3-mediated suppression of RORC and down-regulation of IL-17 expression, favoring Treg cell development. At low concentrations in concert with IL-6 and IL-21, leads to expression of the IL-17 and IL-23 receptors, favoring differentiation to Th17 cells. Stimulates sustained production of collagen through the activation of CREB3L1 by regulated intramembrane proteolysis (RIP). Mediates SMAD2/3 activation by inducing its phosphorylation and subsequent translocation to the nucleus. Positively regulates odontoblastic differentiation in dental papilla cells, via promotion of IPO7-mediated translocation of phosphorylated SMAD2 to the nucleus and subsequent transcription of target genes. Can induce epithelial-to-mesenchymal transition (EMT) and cell migration in various cell types. The polypeptide is Transforming growth factor beta-1 proprotein (TGFB1) (Sus scrofa (Pig)).